The primary structure comprises 153 residues: 3-hydroxyacyl-[acyl-carrier-protein] dehydratase FabZ (153 aa).

Histidine 53 is an active-site residue.

The protein belongs to the thioester dehydratase family. FabZ subfamily.

The protein resides in the cytoplasm. The enzyme catalyses a (3R)-hydroxyacyl-[ACP] = a (2E)-enoyl-[ACP] + H2O. Involved in unsaturated fatty acids biosynthesis. Catalyzes the dehydration of short chain beta-hydroxyacyl-ACPs and long chain saturated and unsaturated beta-hydroxyacyl-ACPs. This chain is 3-hydroxyacyl-[acyl-carrier-protein] dehydratase FabZ, found in Lawsonia intracellularis (strain PHE/MN1-00).